The sequence spans 244 residues: Orotidine 5'-phosphate decarboxylase (244 aa).

Substrate contacts are provided by residues Asp18, Lys43, Asp73–Ile82, Ser130, Pro182–Gly192, Gly206, and Arg207. The active-site Proton donor is the Lys75.

This sequence belongs to the OMP decarboxylase family. Type 1 subfamily. As to quaternary structure, homodimer.

It catalyses the reaction orotidine 5'-phosphate + H(+) = UMP + CO2. It functions in the pathway pyrimidine metabolism; UMP biosynthesis via de novo pathway; UMP from orotate: step 2/2. In terms of biological role, catalyzes the decarboxylation of orotidine 5'-monophosphate (OMP) to uridine 5'-monophosphate (UMP). This Aeropyrum pernix (strain ATCC 700893 / DSM 11879 / JCM 9820 / NBRC 100138 / K1) protein is Orotidine 5'-phosphate decarboxylase.